Reading from the N-terminus, the 132-residue chain is CLAVATA3/ESR (CLE)-related protein TDIF (132 aa).

Residues 1-26 (MDIDLLWSFGGWFFILFPETINYCMA) form the signal peptide. Residues 42–62 (SCSSLFFVALLIITILITMLQ) traverse the membrane as a helical segment. A compositionally biased stretch (polar residues) spans 68 to 77 (EVTSLPTHQP). The tract at residues 68–132 (EVTSLPTHQP…PSGPNPISNR (65 aa)) is disordered. Positions 87–96 (STSSTATTTT) are enriched in low complexity. The span at 101-111 (KRTHHQSHPKP) shows a compositional bias: basic residues. Hydroxyproline is present on residues proline 123 and proline 126. Proline 126 carries O-linked (Ara...) hydroxyproline glycosylation.

This sequence belongs to the CLV3/ESR signal peptide family. Interacts specifically with the leucine-rich repeat receptor-like protein kinase TDR. The TDIFp peptide contains two hydroxprolines, but hydroxylation had no direct effect on TDIFp activity. Post-translationally, the O-glycosylation (arabinosylation) of the hydroxyproline Pro-126 enhances binding affinity of the TDIFp peptide for its receptor.

It is found in the secreted. It localises to the extracellular space. The protein localises to the cell membrane. Functionally, extracellular signal peptide that regulates cell fate. Represses tracheary element differentiation but promotes the formation of procambial cells adjacent to phloem cells in the veins. This Zinnia elegans (Garden zinnia) protein is CLAVATA3/ESR (CLE)-related protein TDIF.